The chain runs to 128 residues: Large ribosomal subunit protein bL17 (128 aa).

The protein belongs to the bacterial ribosomal protein bL17 family. In terms of assembly, part of the 50S ribosomal subunit. Contacts protein L32.

The protein is Large ribosomal subunit protein bL17 of Hydrogenovibrio crunogenus (strain DSM 25203 / XCL-2) (Thiomicrospira crunogena).